We begin with the raw amino-acid sequence, 59 residues long: Large ribosomal subunit protein uL30 (59 aa).

This sequence belongs to the universal ribosomal protein uL30 family. Part of the 50S ribosomal subunit.

The chain is Large ribosomal subunit protein uL30 from Sulfurihydrogenibium sp. (strain YO3AOP1).